Consider the following 144-residue polypeptide: Small ribosomal subunit protein uS11c (144 aa).

This sequence belongs to the universal ribosomal protein uS11 family. Part of the 30S ribosomal subunit.

The protein resides in the plastid. The protein localises to the chloroplast. This is Small ribosomal subunit protein uS11c from Oenothera biennis (German evening primrose).